A 339-amino-acid polypeptide reads, in one-letter code: Intelectin-1 (339 aa).

The first 18 residues, 1-18 (MLSYSLLLLALAFPAGHA), serve as a signal peptide directing secretion. Residues 58 to 108 (GDMNYGYRSCNEIKSSDSRAPDGIYTLATEDGESYQTFCDMTTNGGGWTLV) form the Fibrinogen C-terminal domain. A disulfide bridge links Cys67 with Cys96. The Ca(2+) site is built by His112, Glu113, Asn115, Gly118, Gly123, Asp124, and Asp159. Intrachain disulfides connect Cys120/Cys306, Cys225/Cys285, and Cys277/Cys291. Residue Asn189 is glycosylated (N-linked (GlcNAc...) asparagine). Residues Asn286, Glu288, Glu300, and Asp308 each coordinate Ca(2+). Residues 288–289 (EH) and Glu300 contribute to the a carbohydrate site.

As to quaternary structure, homotrimer; disulfide-linked. Homohexamer; disulfide-linked. Forms primarily homotrimers in solution, but can also form homohexamers. N-glycosylated.

The protein resides in the secreted. It localises to the cytoplasmic vesicle. The protein localises to the secretory vesicle. Lectin that specifically recognizes microbial carbohydrate chains in a calcium-dependent manner. Binds to microbial glycans that contain a terminal acyclic 1,2-diol moiety, including beta-linked D-galactofuranose (beta-Galf) and D-phosphoglycerol-modified glycans. Binds to S.pneumoniae serotypes with glycans that contain beta-linked D-galactofuranose (beta-Galf) and with D-phosphoglycerol-modified glycans. Can bind a variety of monosaccharides (in vitro). Probably plays a role in the defense system against microorganisms. This Xenopus laevis (African clawed frog) protein is Intelectin-1 (itln1).